The chain runs to 181 residues: Large ribosomal subunit protein uL5c (181 aa).

This sequence belongs to the universal ribosomal protein uL5 family. Part of the 50S ribosomal subunit; contacts the 5S rRNA.

It localises to the plastid. Its subcellular location is the chloroplast. Its function is as follows. Binds 5S rRNA, forms part of the central protuberance of the 50S subunit. This Heterosigma akashiwo (strain NIES-293 / 8280G21-1) protein is Large ribosomal subunit protein uL5c (rpl5).